A 233-amino-acid chain; its full sequence is Large ribosomal subunit protein uL1 (233 aa).

Belongs to the universal ribosomal protein uL1 family. As to quaternary structure, part of the 50S ribosomal subunit.

In terms of biological role, binds directly to 23S rRNA. The L1 stalk is quite mobile in the ribosome, and is involved in E site tRNA release. Protein L1 is also a translational repressor protein, it controls the translation of the L11 operon by binding to its mRNA. This is Large ribosomal subunit protein uL1 from Pelobacter propionicus (strain DSM 2379 / NBRC 103807 / OttBd1).